The primary structure comprises 66 residues: Photosystem II reaction center protein J (66 aa).

A helical membrane pass occupies residues 36–56 (LWLVATAGGIAVIFVLGIFFY).

Belongs to the PsbJ family. PSII is composed of 1 copy each of membrane proteins PsbA, PsbB, PsbC, PsbD, PsbE, PsbF, PsbH, PsbI, PsbJ, PsbK, PsbL, PsbM, PsbT, PsbX, PsbY, Psb30/Ycf12, peripheral proteins PsbO, CyanoQ (PsbQ), PsbU, PsbV and a large number of cofactors. It forms dimeric complexes.

Its subcellular location is the cellular thylakoid membrane. One of the components of the core complex of photosystem II (PSII). PSII is a light-driven water:plastoquinone oxidoreductase that uses light energy to abstract electrons from H(2)O, generating O(2) and a proton gradient subsequently used for ATP formation. It consists of a core antenna complex that captures photons, and an electron transfer chain that converts photonic excitation into a charge separation. This Prochlorococcus marinus (strain MIT 9215) protein is Photosystem II reaction center protein J.